The primary structure comprises 1259 residues: uncharacterized protein (1259 aa).

Residues 354-410 (KLNQAGGKRNSSMNNSTQNNNSSRSNNSARNNNSVWNNNNSAWKNNNSAWNDNSSWK) form a disordered region. Residues 362–410 (RNSSMNNSTQNNNSSRSNNSARNNNSVWNNNNSAWKNNNSAWNDNSSWK) show a composition bias toward low complexity.

The protein localises to the virion. This is an uncharacterized protein from Acanthamoeba polyphaga (Amoeba).